The sequence spans 1273 residues: Kinesin-like protein KIN-7O (1273 aa).

The Kinesin motor domain maps to 3–327 (RIHVSVRARP…LQFASRALRV (325 aa)). 79–86 (GQTNSGKT) is a binding site for ATP. The stretch at 333-408 (VNEILTDAAL…QRERVLQEQA (76 aa)) forms a coiled coil. A disordered region spans residues 452–474 (SEDQSNVLSRGSSLESARSERET). The span at 453-467 (EDQSNVLSRGSSLES) shows a compositional bias: polar residues. Coiled-coil stretches lie at residues 602 to 674 (EAIL…ESEV) and 751 to 1023 (VQSS…MEEE).

Belongs to the TRAFAC class myosin-kinesin ATPase superfamily. Kinesin family. KIN-7 subfamily.

The chain is Kinesin-like protein KIN-7O from Arabidopsis thaliana (Mouse-ear cress).